We begin with the raw amino-acid sequence, 169 residues long: uncharacterized protein (169 aa).

Positions 18-130 (VVEHCLAVSE…VAHADNLIFG (113 aa)) constitute an HD domain.

This is an uncharacterized protein from Methanocaldococcus jannaschii (strain ATCC 43067 / DSM 2661 / JAL-1 / JCM 10045 / NBRC 100440) (Methanococcus jannaschii).